A 485-amino-acid polypeptide reads, in one-letter code: Protein nucleotidyltransferase YdiU (485 aa).

Residues Gly90, Gly92, Arg93, Lys113, Asp125, Gly126, Arg176, and Arg183 each contribute to the ATP site. Catalysis depends on Asp252, which acts as the Proton acceptor. Residues Asn253 and Asp262 each coordinate Mg(2+). ATP is bound at residue Asp262.

The protein belongs to the SELO family. Requires Mg(2+) as cofactor. The cofactor is Mn(2+).

The catalysed reaction is L-seryl-[protein] + ATP = 3-O-(5'-adenylyl)-L-seryl-[protein] + diphosphate. It catalyses the reaction L-threonyl-[protein] + ATP = 3-O-(5'-adenylyl)-L-threonyl-[protein] + diphosphate. The enzyme catalyses L-tyrosyl-[protein] + ATP = O-(5'-adenylyl)-L-tyrosyl-[protein] + diphosphate. It carries out the reaction L-histidyl-[protein] + UTP = N(tele)-(5'-uridylyl)-L-histidyl-[protein] + diphosphate. The catalysed reaction is L-seryl-[protein] + UTP = O-(5'-uridylyl)-L-seryl-[protein] + diphosphate. It catalyses the reaction L-tyrosyl-[protein] + UTP = O-(5'-uridylyl)-L-tyrosyl-[protein] + diphosphate. Its function is as follows. Nucleotidyltransferase involved in the post-translational modification of proteins. It can catalyze the addition of adenosine monophosphate (AMP) or uridine monophosphate (UMP) to a protein, resulting in modifications known as AMPylation and UMPylation. The chain is Protein nucleotidyltransferase YdiU from Aliivibrio salmonicida (strain LFI1238) (Vibrio salmonicida (strain LFI1238)).